The following is a 100-amino-acid chain: Protein Tat (100 aa).

The tract at residues 1–24 is interaction with human CREBBP; the sequence is MDPIDPDLEPWKHPGSQPRTVCNN. Positions 1–48 are transactivation; the sequence is MDPIDPDLEPWKHPGSQPRTVCNNCYCKACCYHCIYCFTKKGLGISYG. The Zn(2+) site is built by cysteine 22, cysteine 25, and cysteine 27. Residues 22 to 37 form a cysteine-rich region; that stretch reads CNNCYCKACCYHCIYC. Lysine 28 carries the N6-acetyllysine; by host PCAF modification. Zn(2+)-binding residues include cysteine 30, histidine 33, cysteine 34, and cysteine 37. The segment at 38-48 is core; it reads FTKKGLGISYG. The segment covering 48–58 has biased composition (basic residues); sequence GRKKRTTRRRT. Positions 48–100 are disordered; that stretch reads GRKKRTTRRRTAPAGSKNNQDSIPKQPLSQSRGNKEGSEKSTKEVASKTEADQ. Positions 49-57 match the Nuclear localization signal, RNA-binding (TAR), and protein transduction motif; that stretch reads RKKRTTRRR. Positions 49 to 87 are interaction with the host capping enzyme RNGTT; it reads RKKRTTRRRTAPAGSKNNQDSIPKQPLSQSRGNKEGSEK. Residues lysine 50 and lysine 51 each carry the N6-acetyllysine; by host EP300 and GCN5L2 modification. Arginine 52 bears the Asymmetric dimethylarginine; by host PRMT6 mark. Positions 63 to 79 are enriched in polar residues; it reads SKNNQDSIPKQPLSQSR. A Glycyl lysine isopeptide (Lys-Gly) (interchain with G-Cter in ubiquitin) cross-link involves residue lysine 72. The segment covering 80–100 has biased composition (basic and acidic residues); sequence GNKEGSEKSTKEVASKTEADQ.

The protein belongs to the lentiviruses Tat family. In terms of assembly, interacts with host CCNT1. Associates with the P-TEFb complex composed at least of Tat, P-TEFb (CDK9 and CCNT1), TAR RNA, RNA Pol II. Recruits the HATs CREBBP, TAF1/TFIID, EP300, PCAF and GCN5L2. Interacts with host KAT5/Tip60; this interaction targets the latter to degradation. Interacts with the host deacetylase SIRT1. Interacts with host capping enzyme RNGTT; this interaction stimulates RNGTT. Binds to host KDR, and to the host integrins ITGAV/ITGB3 and ITGA5/ITGB1. Interacts with host KPNB1/importin beta-1 without previous binding to KPNA1/importin alpha-1. Interacts with EIF2AK2. Interacts with host nucleosome assembly protein NAP1L1; this interaction may be required for the transport of Tat within the nucleus, since the two proteins interact at the nuclear rim. Interacts with host C1QBP/SF2P32; this interaction involves lysine-acetylated Tat. Interacts with the host chemokine receptors CCR2, CCR3 and CXCR4. Interacts with host DPP4/CD26; this interaction may trigger an anti-proliferative effect. Interacts with host LDLR. Interacts with the host extracellular matrix metalloproteinase MMP1. Interacts with host PRMT6; this interaction mediates Tat's methylation. Interacts with, and is ubiquitinated by MDM2/Hdm2. Interacts with host PSMC3 and HTATIP2. Interacts with STAB1; this interaction may overcome SATB1-mediated repression of IL2 and IL2RA (interleukin) in T cells by binding to the same domain than HDAC1. Interacts (when acetylated) with human CDK13, thereby increasing HIV-1 mRNA splicing and promoting the production of the doubly spliced HIV-1 protein Nef. Interacts with host TBP; this interaction modulates the activity of transcriptional pre-initiation complex. Interacts with host RELA. In terms of processing, asymmetrical arginine methylation by host PRMT6 seems to diminish the transactivation capacity of Tat and affects the interaction with host CCNT1. Acetylation by EP300, CREBBP, GCN5L2/GCN5 and PCAF regulates the transactivation activity of Tat. EP300-mediated acetylation of Lys-50 promotes dissociation of Tat from the TAR RNA through the competitive binding to PCAF's bromodomain. In addition, the non-acetylated Tat's N-terminus can also interact with PCAF. PCAF-mediated acetylation of Lys-28 enhances Tat's binding to CCNT1. Lys-50 is deacetylated by SIRT1. Post-translationally, polyubiquitination by host MDM2 does not target Tat to degradation, but activates its transactivation function and fosters interaction with CCNT1 and TAR RNA. In terms of processing, phosphorylated by EIF2AK2 on serine and threonine residues adjacent to the basic region important for TAR RNA binding and function. Phosphorylation of Tat by EIF2AK2 is dependent on the prior activation of EIF2AK2 by dsRNA.

It localises to the host nucleus. It is found in the host nucleolus. The protein resides in the host cytoplasm. The protein localises to the secreted. Transcriptional activator that increases RNA Pol II processivity, thereby increasing the level of full-length viral transcripts. Recognizes a hairpin structure at the 5'-LTR of the nascent viral mRNAs referred to as the transactivation responsive RNA element (TAR) and recruits the cyclin T1-CDK9 complex (P-TEFb complex) that will in turn hyperphosphorylate the RNA polymerase II to allow efficient elongation. The CDK9 component of P-TEFb and other Tat-activated kinases hyperphosphorylate the C-terminus of RNA Pol II that becomes stabilized and much more processive. Other factors such as HTATSF1/Tat-SF1, SUPT5H/SPT5, and HTATIP2 are also important for Tat's function. Besides its effect on RNA Pol II processivity, Tat induces chromatin remodeling of proviral genes by recruiting the histone acetyltransferases (HATs) CREBBP, EP300 and PCAF to the chromatin. This also contributes to the increase in proviral transcription rate, especially when the provirus integrates in transcriptionally silent region of the host genome. To ensure maximal activation of the LTR, Tat mediates nuclear translocation of NF-kappa-B by interacting with host RELA. Through its interaction with host TBP, Tat may also modulate transcription initiation. Tat can reactivate a latently infected cell by penetrating in it and transactivating its LTR promoter. In the cytoplasm, Tat is thought to act as a translational activator of HIV-1 mRNAs. In terms of biological role, extracellular circulating Tat can be endocytosed by surrounding uninfected cells via the binding to several surface receptors such as CD26, CXCR4, heparan sulfate proteoglycans (HSPG) or LDLR. Neurons are rarely infected, but they internalize Tat via their LDLR. Through its interaction with nuclear HATs, Tat is potentially able to control the acetylation-dependent cellular gene expression. Modulates the expression of many cellular genes involved in cell survival, proliferation or in coding for cytokines or cytokine receptors. Tat plays a role in T-cell and neurons apoptosis. Tat induced neurotoxicity and apoptosis probably contribute to neuroAIDS. Circulating Tat also acts as a chemokine-like and/or growth factor-like molecule that binds to specific receptors on the surface of the cells, affecting many cellular pathways. In the vascular system, Tat binds to ITGAV/ITGB3 and ITGA5/ITGB1 integrins dimers at the surface of endothelial cells and competes with bFGF for heparin-binding sites, leading to an excess of soluble bFGF. This is Protein Tat from Pan (chimpanzees).